Consider the following 143-residue polypeptide: Photosystem I reaction center subunit IV A, chloroplastic (143 aa).

The N-terminal 44 residues, 1 to 44, are a transit peptide targeting the chloroplast; it reads MAMTTASTVFVLPANVTSVAGASSSRSSVSFLPMRNAGSRLVVR. A disordered region spans residues 43 to 85; sequence VRAAEDPAPASSSSKDSPAAAAAPDGATATKPKPPPIGPKRGS. Residues 48 to 73 show a composition bias toward low complexity; the sequence is DPAPASSSSKDSPAAAAAPDGATATK.

It belongs to the PsaE family. In terms of processing, 2 isoforms may exist. With or without the N-terminal alanine.

The protein resides in the plastid. It is found in the chloroplast thylakoid membrane. In terms of biological role, stabilizes the interaction between PsaC and the PSI core, assists the docking of the ferredoxin to PSI and interacts with ferredoxin-NADP oxidoreductase. The sequence is that of Photosystem I reaction center subunit IV A, chloroplastic (PSAE1) from Arabidopsis thaliana (Mouse-ear cress).